The chain runs to 341 residues: Malate dehydrogenase 2, mitochondrial (341 aa).

Residues 1 to 22 (MFRSMIVRSASPVKQGLLRRGF) constitute a mitochondrion transit peptide. NAD(+)-binding positions include 36 to 42 (GAAGGIG) and aspartate 62. Residues arginine 109 and arginine 115 each coordinate substrate. Residues asparagine 122 and 145-147 (ISN) each bind NAD(+). Asparagine 147 and arginine 181 together coordinate substrate. The Proton acceptor role is filled by histidine 205. NAD(+) is bound at residue methionine 256.

It belongs to the LDH/MDH superfamily. MDH type 1 family. Homodimer. As to expression, expressed in rosette leaves at low levels.

It localises to the mitochondrion matrix. The enzyme catalyses (S)-malate + NAD(+) = oxaloacetate + NADH + H(+). Its function is as follows. Catalyzes a reversible NAD-dependent dehydrogenase reaction involved in central metabolism and redox homeostasis between organelle compartments. Required for carbon dioxide and energy partitioning in leaves. May limit photorespiration during the dark phase. Can convert 2-ketoglutarate to L-2-hydroxyglutarate in vitro. The protein is Malate dehydrogenase 2, mitochondrial of Arabidopsis thaliana (Mouse-ear cress).